The primary structure comprises 878 residues: Pyruvate dehydrogenase phosphatase regulatory subunit, mitochondrial (878 aa).

Residues 1–26 (MLPRLLAVVRGPGSCRGWREGSPARG) constitute a mitochondrion transit peptide.

It belongs to the GcvT family. As to quaternary structure, heterodimer of a catalytic (PDP1) and a regulatory (PDPR) subunit.

Its subcellular location is the mitochondrion matrix. Its function is as follows. Decreases the sensitivity of PDP1 to magnesium ions, and this inhibition is reversed by the polyamine spermine. The sequence is that of Pyruvate dehydrogenase phosphatase regulatory subunit, mitochondrial (PDPR) from Bos taurus (Bovine).